The sequence spans 274 residues: MLSVAARSGPFAPVLSATSRGVAGALRPLVQATVPATPEQPVLDLKRPFLSRESLSGQAVRRPLVASVGLNVPASVCYSHTDVKVPDFSEYRRLEVLDSTKSSRESSEARKGFSYLVTGVTTVGVAYAAKNAVTQFVSSMSASADVLALAKIEIKLSDIPEGKNMAFKWRGKPLFVRHRTQKEIEQEAAVELSQLRDPQHDLDRVKKPEWVILIGVCTHLGCVPIANAGDFGGYYCPCHGSHYDASGRIRLGPAPLNLEVPTYEFTSDDMVIVG.

Over 79–103 (SHTDVKVPDFSEYRRLEVLDSTKSS) the chain is Mitochondrial matrix. A helical membrane pass occupies residues 104–140 (RESSEARKGFSYLVTGVTTVGVAYAAKNAVTQFVSSM). The Mitochondrial intermembrane segment spans residues 141 to 274 (SASADVLALA…FTSDDMVIVG (134 aa)). The Rieske domain occupies 187–272 (EAAVELSQLR…YEFTSDDMVI (86 aa)). Positions 217, 219, 236, 239, and 241 each coordinate [2Fe-2S] cluster. The cysteines at positions 222 and 238 are disulfide-linked.

The protein belongs to the Rieske iron-sulfur protein family. As to quaternary structure, component of the ubiquinol-cytochrome c oxidoreductase (cytochrome b-c1 complex, complex III, CIII), a multisubunit enzyme composed of 11 subunits. The complex is composed of 3 respiratory subunits cytochrome b, cytochrome c1 and Rieske protein UQCRFS1, 2 core protein subunits UQCRC1/QCR1 and UQCRC2/QCR2, and 6 low-molecular weight protein subunits UQCRH/QCR6, UQCRB/QCR7, UQCRQ/QCR8, UQCR10/QCR9, UQCR11/QCR10 and subunit 9, the cleavage product of Rieske protein UQCRFS1. The complex exists as an obligatory dimer and forms supercomplexes (SCs) in the inner mitochondrial membrane with NADH-ubiquinone oxidoreductase (complex I, CI) and cytochrome c oxidase (complex IV, CIV), resulting in different assemblies (supercomplex SCI(1)III(2)IV(1) and megacomplex MCI(2)III(2)IV(2)). Incorporation of the Rieske protein UQCRFS1 is the penultimate step in complex III assembly. Interacts with TTC19, which is involved in the clearance of UQCRFS1 fragments. In terms of assembly, component of the ubiquinol-cytochrome c oxidoreductase (cytochrome b-c1 complex, complex III, CIII). Subunit 9 corresponds to the mitochondrial targeting sequence (MTS) of Rieske protein UQCRFS1. It is retained after processing and incorporated inside complex III, where it remains bound to the complex and localizes between the 2 core subunits UQCRC1/QCR1 and UQCRC2/QCR2. It depends on [2Fe-2S] cluster as a cofactor. Post-translationally, proteolytic processing is necessary for the correct insertion of UQCRFS1 in the complex III dimer. Several fragments are generated during UQCRFS1 insertion, most probably due to the endogenous matrix-processing peptidase (MPP) activity of the 2 core protein subunits UQCRC1/QCR1 and UQCRC2/QCR2, which are homologous to the 2 mitochondrial-processing peptidase (MPP) subunits beta-MPP and alpha-MPP respectively. The action of the protease is also necessary for the clearance of the UQCRFS1 fragments.

The protein resides in the mitochondrion inner membrane. The enzyme catalyses a quinol + 2 Fe(III)-[cytochrome c](out) = a quinone + 2 Fe(II)-[cytochrome c](out) + 2 H(+)(out). In terms of biological role, component of the ubiquinol-cytochrome c oxidoreductase, a multisubunit transmembrane complex that is part of the mitochondrial electron transport chain which drives oxidative phosphorylation. The respiratory chain contains 3 multisubunit complexes succinate dehydrogenase (complex II, CII), ubiquinol-cytochrome c oxidoreductase (cytochrome b-c1 complex, complex III, CIII) and cytochrome c oxidase (complex IV, CIV), that cooperate to transfer electrons derived from NADH and succinate to molecular oxygen, creating an electrochemical gradient over the inner membrane that drives transmembrane transport and the ATP synthase. The cytochrome b-c1 complex catalyzes electron transfer from ubiquinol to cytochrome c, linking this redox reaction to translocation of protons across the mitochondrial inner membrane, with protons being carried across the membrane as hydrogens on the quinol. In the process called Q cycle, 2 protons are consumed from the matrix, 4 protons are released into the intermembrane space and 2 electrons are passed to cytochrome c. The Rieske protein is a catalytic core subunit containing a [2Fe-2S] iron-sulfur cluster. It cycles between 2 conformational states during catalysis to transfer electrons from the quinol bound in the Q(0) site in cytochrome b to cytochrome c1. Incorporation of UQCRFS1 is the penultimate step in complex III assembly. Functionally, component of the ubiquinol-cytochrome c oxidoreductase (cytochrome b-c1 complex, complex III, CIII). UQCRFS1 undergoes proteolytic processing once it is incorporated in the complex III dimer. One of the fragments, called subunit 9, corresponds to its mitochondrial targeting sequence (MTS). The proteolytic processing is necessary for the correct insertion of UQCRFS1 in the complex III dimer, but the persistence of UQCRFS1-derived fragments may prevent newly imported UQCRFS1 to be processed and assembled into complex III and is detrimental for the complex III structure and function. This chain is Cytochrome b-c1 complex subunit Rieske, mitochondrial (UQCRFS1), found in Pan paniscus (Pygmy chimpanzee).